We begin with the raw amino-acid sequence, 328 residues long: Serine/threonine-protein phosphatase PP2A-2 catalytic subunit (328 aa).

Mn(2+) contacts are provided by D76, H78, D104, and N136. The Proton donor role is filled by H137. Mn(2+)-binding residues include H186 and H260. Residue L328 is modified to Leucine methyl ester.

This sequence belongs to the PPP phosphatase family. PP-2A subfamily. Requires Mn(2+) as cofactor.

It catalyses the reaction O-phospho-L-seryl-[protein] + H2O = L-seryl-[protein] + phosphate. The enzyme catalyses O-phospho-L-threonyl-[protein] + H2O = L-threonyl-[protein] + phosphate. The chain is Serine/threonine-protein phosphatase PP2A-2 catalytic subunit (PP2A-2) from Blumeria hordei (Barley powdery mildew).